Reading from the N-terminus, the 113-residue chain is U11-theraphotoxin-Hhn1f (113 aa).

A signal peptide spans 1 to 21 (MNTVRVTFLLVFVLAVSLGQA). The propeptide occupies 22-74 (DKDENRMEMQEKTEQGKSYLDFAENLLLQKLEELEAKLLEEDSKESRNSRQKR). Residues 61–82 (EEDSKESRNSRQKRCIGEGVPC) are disordered. 3 disulfides stabilise this stretch: cysteine 75/cysteine 90, cysteine 82/cysteine 95, and cysteine 89/cysteine 110.

Belongs to the neurotoxin 14 (magi-1) family. 01 (HNTX-16) subfamily. In terms of tissue distribution, expressed by the venom gland.

It localises to the secreted. Its function is as follows. Probable ion channel inhibitor. The chain is U11-theraphotoxin-Hhn1f from Cyriopagopus hainanus (Chinese bird spider).